The following is a 560-amino-acid chain: NRAMP-like transporter smf-3 (560 aa).

Topologically, residues 1–43 are cytoplasmic; the sequence is MEGEMKCPIEEIREKPEMRKAQQTYEVQVEVEDTPDTTFSWRK. A helical membrane pass occupies residues 44-64; that stretch reads LWAFTGPGFLMSIAYLDPGNI. Residues 65–71 lie on the Extracellular side of the membrane; that stretch reads ESDLQAG. A helical membrane pass occupies residues 72–92; sequence AISYFKLIWVLLVAHIMGLLL. Over 93-120 the chain is Cytoplasmic; the sequence is QRLAARLGVVSGKHMAEIAFSYYPKIPR. A helical membrane pass occupies residues 121–141; the sequence is LVLWMLVESAIVGSDMQEVIG. The Extracellular portion of the chain corresponds to 142 to 152; it reads TAISFYLLSNG. Residues 153-173 form a helical membrane-spanning segment; it reads VIPLWAGVLITICDTFTFLFL. Residues 174-182 lie on the Cytoplasmic side of the membrane; that stretch reads EKYGVRKFE. The helical transmembrane segment at 183-203 threads the bilayer; the sequence is AFFCFLITCMAITFGYEFGVS. At 204–229 the chain is on the extracellular side; that stretch reads APDAGKMFSGMFVPWCNGCDNNMVMQ. The chain crosses the membrane as a helical span at residues 230 to 250; the sequence is GVAIIGAVIMPHNFYLHSALV. The Cytoplasmic portion of the chain corresponds to 251–268; sequence KSRRVDRRRAEKVTEANK. A helical transmembrane segment spans residues 269–289; the sequence is YFFIESAFALFVSFIINTLVI. Residues 290–339 are Extracellular-facing; sequence SVFAQGMYGKTNQDIRDTCYNNTHNGMPDFYKVEFPANNDAAQSDIYHAG. Asparagine 310 is a glycosylation site (N-linked (GlcNAc...) asparagine). A helical transmembrane segment spans residues 340–360; that stretch reads IFLGCTFGIFALYVWAVGILA. Topologically, residues 361 to 390 are cytoplasmic; it reads AGQSSTMTGTYAGQFAMEGFIQIKLPQWKR. The helical transmembrane segment at 391-411 threads the bilayer; that stretch reads ILITRSLAILPTLAVVIFSGG. Over 412–420 the chain is Extracellular; the sequence is IDNISSLND. Asparagine 414 carries N-linked (GlcNAc...) asparagine glycosylation. Residues 421–441 form a helical membrane-spanning segment; that stretch reads FLNCLQLIQLPFALIPVLTFV. Over 442 to 458 the chain is Cytoplasmic; that stretch reads SDRNIMHEYKLASVSKV. Residues 459-479 traverse the membrane as a helical segment; it reads VSIVISLIILFINFYFLYSWI. Residues 480-486 lie on the Extracellular side of the membrane; it reads GSTFGYN. Residues 487 to 507 form a helical membrane-spanning segment; the sequence is AVSIPITIFCAIFYIIFIAYL. Topologically, residues 508-560 are cytoplasmic; that stretch reads TYYCLVAMEFISPIQTKWLAEPIYHDFDAPWLEDSENPSTKNTISDDELSMRY.

This sequence belongs to the NRAMP family. In terms of tissue distribution, expressed in dopaminergic neurons (at protein level). Expressed in intestine with a weaker expression in the most proximal and distal regions. Weakly expressed in the hyp1-6, hyp7 and hyp8-12 hypodermis and in head and tail neurons.

It localises to the apical cell membrane. The protein resides in the cytoplasmic vesicle membrane. Its function is as follows. Probable divalent metal ion transporter which regulates the uptake of several heavy metals such as Mn(2+), Al(3+) and iron. Plays a role in modulating Al(3+)-induced dopamine (DA) neuron degeneration through the intracellular sequestration of Al(3+). This chain is NRAMP-like transporter smf-3, found in Caenorhabditis elegans.